The primary structure comprises 238 residues: Probable phosphatase phospho2 (238 aa).

Catalysis depends on Asp-8, which acts as the Nucleophile. Mg(2+) is bound by residues Asp-8 and Asp-10. Asp-10 (proton donor) is an active-site residue. Positions 19 and 99 each coordinate substrate. A Mg(2+)-binding site is contributed by Asp-179.

The protein belongs to the HAD-like hydrolase superfamily. PHOSPHO family. Requires Mg(2+) as cofactor.

In terms of biological role, probable phosphatase. This Xenopus tropicalis (Western clawed frog) protein is Probable phosphatase phospho2 (phospho2).